The sequence spans 209 residues: Eukaryotic translation initiation factor 4E (209 aa).

The protein belongs to the eukaryotic initiation factor 4E family. EIF4F is a multi-subunit complex, the composition of which varies with external and internal environmental conditions. It is composed of at least eIF4A, eIF4E and eIF4G. eIF4E is also known to interact with other partners.

Functionally, recognizes and binds the 7-methylguanosine-containing mRNA cap during an early step in the initiation of protein synthesis and facilitates ribosome binding by inducing the unwinding of the mRNAs secondary structures. The polypeptide is Eukaryotic translation initiation factor 4E (TIF45) (Candida glabrata (strain ATCC 2001 / BCRC 20586 / JCM 3761 / NBRC 0622 / NRRL Y-65 / CBS 138) (Yeast)).